A 299-amino-acid polypeptide reads, in one-letter code: Urease accessory protein UreD (299 aa).

The protein belongs to the UreD family. As to quaternary structure, ureD, UreF and UreG form a complex that acts as a GTP-hydrolysis-dependent molecular chaperone, activating the urease apoprotein by helping to assemble the nickel containing metallocenter of UreC. The UreE protein probably delivers the nickel.

The protein localises to the cytoplasm. Its function is as follows. Required for maturation of urease via the functional incorporation of the urease nickel metallocenter. This is Urease accessory protein UreD from Haloarcula marismortui (strain ATCC 43049 / DSM 3752 / JCM 8966 / VKM B-1809) (Halobacterium marismortui).